Consider the following 322-residue polypeptide: Tetraacyldisaccharide 4'-kinase (322 aa).

An ATP-binding site is contributed by 54–61 (SVGGTGKT).

It belongs to the LpxK family.

It catalyses the reaction a lipid A disaccharide + ATP = a lipid IVA + ADP + H(+). Its pathway is glycolipid biosynthesis; lipid IV(A) biosynthesis; lipid IV(A) from (3R)-3-hydroxytetradecanoyl-[acyl-carrier-protein] and UDP-N-acetyl-alpha-D-glucosamine: step 6/6. Functionally, transfers the gamma-phosphate of ATP to the 4'-position of a tetraacyldisaccharide 1-phosphate intermediate (termed DS-1-P) to form tetraacyldisaccharide 1,4'-bis-phosphate (lipid IVA). This chain is Tetraacyldisaccharide 4'-kinase, found in Francisella philomiragia subsp. philomiragia (strain ATCC 25017 / CCUG 19701 / FSC 153 / O#319-036).